Consider the following 276-residue polypeptide: Diaminopimelate epimerase (276 aa).

Substrate is bound by residues N13, Q46, and N66. C75 functions as the Proton donor in the catalytic mechanism. Residues G76–N77, N159, N192, and E210–R211 each bind substrate. The active-site Proton acceptor is the C219. Residue G220 to T221 coordinates substrate.

It belongs to the diaminopimelate epimerase family. In terms of assembly, homodimer.

It is found in the cytoplasm. The catalysed reaction is (2S,6S)-2,6-diaminopimelate = meso-2,6-diaminopimelate. The protein operates within amino-acid biosynthesis; L-lysine biosynthesis via DAP pathway; DL-2,6-diaminopimelate from LL-2,6-diaminopimelate: step 1/1. In terms of biological role, catalyzes the stereoinversion of LL-2,6-diaminopimelate (L,L-DAP) to meso-diaminopimelate (meso-DAP), a precursor of L-lysine and an essential component of the bacterial peptidoglycan. In Pseudomonas syringae pv. syringae (strain B728a), this protein is Diaminopimelate epimerase.